Here is a 420-residue protein sequence, read N- to C-terminus: Serine protease inhibitor A3B (420 aa).

Positions 1–17 (MAFIAALGLLMAEICPA) are cleaved as a signal peptide. N-linked (GlcNAc...) asparagine glycosylation is found at N104 and N349. Positions 367-392 (GTEGDAITIVGYNFMSAKLKPVFVKF) are RCL.

It belongs to the serpin family.

The protein localises to the secreted. This chain is Serine protease inhibitor A3B (Serpina3b), found in Mus musculus (Mouse).